We begin with the raw amino-acid sequence, 1309 residues long: Mediator of RNA polymerase II transcription subunit 33A (1309 aa).

A disordered region spans residues 809–829 (QTLNPVNSGTSSSSGAASEDS). Residues 816–826 (SGTSSSSGAAS) show a composition bias toward low complexity.

This sequence belongs to the Mediator complex subunit 33 family. Component of the Mediator complex.

It is found in the nucleus. In terms of biological role, component of the Mediator complex, a coactivator involved in the regulated transcription of nearly all RNA polymerase II-dependent genes. Mediator functions as a bridge to convey information from gene-specific regulatory proteins to the basal RNA polymerase II transcription machinery. The Mediator complex, having a compact conformation in its free form, is recruited to promoters by direct interactions with regulatory proteins and serves for the assembly of a functional preinitiation complex with RNA polymerase II and the general transcription factors. Involved in the repression of phenylpropanoid biosynthesis. May compete with MED33B for common binding partners or for occupancy in Mediator. In Arabidopsis thaliana (Mouse-ear cress), this protein is Mediator of RNA polymerase II transcription subunit 33A (MED33A).